A 316-amino-acid polypeptide reads, in one-letter code: Ninja-family protein 2 (316 aa).

Disordered stretches follow at residues 1 to 29 and 72 to 236; these read MASR…GEPD and TSDD…TSTG. The span at 99–108 shows a compositional bias: basic and acidic residues; the sequence is ERWRRREMQS. Residues 156-166 are compositionally biased toward polar residues; the sequence is DQGNTSSSMPE. Composition is skewed to low complexity over residues 179–199 and 222–235; these read SSME…QNKS and LRTL…TTST.

Belongs to the Ninja family.

It is found in the nucleus. The chain is Ninja-family protein 2 (AFP-B1) from Triticum aestivum (Wheat).